We begin with the raw amino-acid sequence, 185 residues long: Elongation factor P (185 aa).

This sequence belongs to the elongation factor P family.

The protein resides in the cytoplasm. It participates in protein biosynthesis; polypeptide chain elongation. In terms of biological role, involved in peptide bond synthesis. Stimulates efficient translation and peptide-bond synthesis on native or reconstituted 70S ribosomes in vitro. Probably functions indirectly by altering the affinity of the ribosome for aminoacyl-tRNA, thus increasing their reactivity as acceptors for peptidyl transferase. The protein is Elongation factor P of Lactococcus lactis subsp. cremoris (strain MG1363).